The following is a 2667-amino-acid chain: eIF-2-alpha kinase activator GCN1 (2667 aa).

8 HEAT repeats span residues Asp-19 to Ser-56, Gln-95 to Thr-132, Ser-159 to Met-198, Asp-293 to Val-330, Leu-336 to Asp-375, Ser-398 to Ile-439, Glu-466 to Asn-503, and Leu-794 to Val-832. Residues Arg-842 to Glu-879 are disordered. 18 HEAT repeats span residues Pro-929 to Ser-967, Leu-985 to Asn-1024, Gly-1085 to Pro-1122, His-1199 to Leu-1237, Gly-1290 to Ala-1330, Pro-1333 to Lys-1370, Gln-1371 to Leu-1407, Leu-1412 to Arg-1450, Pro-1454 to Gly-1491, His-1492 to Lys-1529, Ser-1533 to Asn-1570, Glu-1572 to Asp-1608, Ala-1610 to Pro-1647, Pro-1652 to Glu-1689, Asn-1691 to Ile-1728, Ser-1729 to Asp-1766, Pro-1770 to Val-1807, and Gly-1809 to Gly-1845. Positions Ser-1853–Ile-1875 are disordered. 10 HEAT repeats span residues Glu-1882 to Lys-1919, Glu-1923 to Asp-1960, Ile-1962 to Thr-1998, Pro-2002 to Ser-2039, Lys-2040 to Ser-2078, Val-2080 to Glu-2110, Val-2114 to Glu-2152, Gly-2154 to Met-2190, Glu-2193 to Lys-2230, and Lys-2264 to Ala-2301. The RWDBD region stretch occupies residues Gly-2265–Leu-2412. The stretch at Gln-2326–Ile-2348 is one HEAT 37; degenerate repeat. Residues Phe-2349–Ser-2385 form an HEAT 38; degenerate repeat. 4 HEAT repeats span residues Asp-2387–Lys-2421, Ala-2425–Ser-2462, Pro-2508–Leu-2545, and Thr-2546–Gln-2583.

It belongs to the GCN1 family. Interacts with eif2ak4/gcn2; this interaction stimulates the eif2ak4/gcn2 kinase activity and is impaired by impact upon a variety of stress conditions, such as amino acid depletion, UV-C irradiation, proteasome inhibitor treatment and glucose deprivation. Interacts with impact; this prevents the interaction of gcn1 with eif2ak4/gcn2 and inhibits eif2ak4/gcn2 kinase activity.

It is found in the cytoplasm. In terms of biological role, ribosome collision sensor that activates a translation quality control pathway when a ribosome has stalled during translation. Directly binds to the ribosome and acts as a sentinel for colliding ribosomes. Gcn1 also acts as a positive activator of the integrated stress response (ISR) by mediating activation of eif2ak4/gcn2 in response to amino acid starvation. Interaction with eif2ak4/gcn2 on translating ribosomes stimulates eif2ak4/gcn2 kinase activity, leading to phosphorylation of eukaryotic translation initiation factor 2 (eIF-2-alpha/eif2s1). EIF2S1/eIF-2-alpha phosphorylation converts EIF2S1/eIF-2-alpha into a global protein synthesis inhibitor, leading to a global attenuation of cap-dependent translation, and thus to a reduced overall utilization of amino acids, while concomitantly initiating the preferential translation of ISR-specific mRNAs, such as the transcriptional activator atf4, and hence allowing atf4-mediated reprogramming of amino acid biosynthetic gene expression to alleviate nutrient depletion. The chain is eIF-2-alpha kinase activator GCN1 from Dictyostelium discoideum (Social amoeba).